The sequence spans 365 residues: Flagellar P-ring protein (365 aa).

A signal peptide spans 1–22; the sequence is MSVRRFLVWILALTVGAAPVMA.

This sequence belongs to the FlgI family. As to quaternary structure, the basal body constitutes a major portion of the flagellar organelle and consists of four rings (L,P,S, and M) mounted on a central rod.

It is found in the periplasm. The protein localises to the bacterial flagellum basal body. Its function is as follows. Assembles around the rod to form the L-ring and probably protects the motor/basal body from shearing forces during rotation. The protein is Flagellar P-ring protein of Marinobacter nauticus (strain ATCC 700491 / DSM 11845 / VT8) (Marinobacter aquaeolei).